A 399-amino-acid polypeptide reads, in one-letter code: uncharacterized protein (399 aa).

It belongs to the TelA family.

This is an uncharacterized protein from Listeria monocytogenes serovar 1/2a (strain ATCC BAA-679 / EGD-e).